Consider the following 222-residue polypeptide: ATP synthase F(0) complex subunit a (222 aa).

6 helical membrane passes run 7–27, 64–84, 93–113, 132–152, 160–180, and 185–205; these read AFFDVPVGTMMLAIAFPAILL, WSLMLITLTLFIGLTNLLGLL, QLTVNLSMAIPLWTGTVILGF, FLIPMIIIIETISLLIRPVTL, ITAGHLLIHLTGTAALTLLSI, and ITVTFITVVVLTILELAVALI.

It belongs to the ATPase A chain family. Component of the ATP synthase complex composed at least of ATP5F1A/subunit alpha, ATP5F1B/subunit beta, ATP5MC1/subunit c (homooctomer), MT-ATP6/subunit a, MT-ATP8/subunit 8, ATP5ME/subunit e, ATP5MF/subunit f, ATP5MG/subunit g, ATP5MK/subunit k, ATP5MJ/subunit j, ATP5F1C/subunit gamma, ATP5F1D/subunit delta, ATP5F1E/subunit epsilon, ATP5PF/subunit F6, ATP5PB/subunit b, ATP5PD/subunit d, ATP5PO/subunit OSCP. ATP synthase complex consists of a soluble F(1) head domain (subunits alpha(3) and beta(3)) - the catalytic core - and a membrane F(0) domain - the membrane proton channel (subunits c, a, 8, e, f, g, k and j). These two domains are linked by a central stalk (subunits gamma, delta, and epsilon) rotating inside the F1 region and a stationary peripheral stalk (subunits F6, b, d, and OSCP). Interacts with DNAJC30; interaction is direct.

It is found in the mitochondrion inner membrane. The catalysed reaction is H(+)(in) = H(+)(out). In terms of biological role, subunit a, of the mitochondrial membrane ATP synthase complex (F(1)F(0) ATP synthase or Complex V) that produces ATP from ADP in the presence of a proton gradient across the membrane which is generated by electron transport complexes of the respiratory chain. ATP synthase complex consist of a soluble F(1) head domain - the catalytic core - and a membrane F(1) domain - the membrane proton channel. These two domains are linked by a central stalk rotating inside the F(1) region and a stationary peripheral stalk. During catalysis, ATP synthesis in the catalytic domain of F(1) is coupled via a rotary mechanism of the central stalk subunits to proton translocation. With the subunit c (ATP5MC1), forms the proton-conducting channel in the F(0) domain, that contains two crucial half-channels (inlet and outlet) that facilitate proton movement from the mitochondrial intermembrane space (IMS) into the matrix. Protons are taken up via the inlet half-channel and released through the outlet half-channel, following a Grotthuss mechanism. In Mammuthus primigenius (Siberian woolly mammoth), this protein is ATP synthase F(0) complex subunit a.